Consider the following 1042-residue polypeptide: Atrial natriuretic peptide-converting enzyme (1042 aa).

A disordered region spans residues 1–25 (MKQSPALAPEERCRRAGSPKPVLRA). The Cytoplasmic segment spans residues 1 to 45 (MKQSPALAPEERCRRAGSPKPVLRADDNNMGNGCSQKLATANLLR). The short motif at 26-29 (DDNN) is the DDNN motif element. The chain crosses the membrane as a helical; Signal-anchor for type II membrane protein span at residues 46-66 (FLLLVLIPCICALVLLLVILL). The Extracellular segment spans residues 67–1042 (SYVGTLQKVY…QIYIQTFLLN (976 aa)). Residues Asn80, Asn104, Asn135, and Asn141 are each glycosylated (N-linked (GlcNAc...) asparagine). The FZ 1 domain occupies 134-259 (RNTSACMNIT…SNVSRICFSP (126 aa)). 8 disulfides stabilise this stretch: Cys139/Cys199, Cys147/Cys192, Cys183/Cys223, Cys212/Cys256, Cys216/Cys240, Cys269/Cys282, Cys277/Cys295, and Cys289/Cys304. Asn231, Asn245, and Asn251 each carry an N-linked (GlcNAc...) asparagine glycan. LDL-receptor class A domains lie at 268-304 (LCGR…EAHC), 305-340 (NCSE…EQNC), 341-377 (DCNP…EVNC), and 378-415 (SCHS…ENCS). An N-linked (GlcNAc...) asparagine glycan is attached at Asn305. 9 disulfide bridges follow: Cys306–Cys318, Cys313–Cys331, Cys325–Cys340, Cys342–Cys355, Cys350–Cys368, Cys362–Cys377, Cys379–Cys392, Cys387–Cys405, and Cys399–Cys414. N-linked (GlcNAc...) asparagine glycosylation is present at Asn320. An N-linked (GlcNAc...) asparagine glycan is attached at Asn376. Asn413, Asn446, Asn451, and Asn469 each carry an N-linked (GlcNAc...) asparagine glycan. One can recognise an FZ 2 domain in the interval 450 to 573 (NNCSQCEPIT…NSDNQTCLMP (124 aa)). Intrachain disulfides connect Cys455–Cys518, Cys463–Cys511, Cys502–Cys540, Cys529–Cys570, Cys533–Cys557, Cys580–Cys592, Cys587–Cys605, Cys599–Cys614, Cys616–Cys630, Cys624–Cys643, Cys637–Cys652, Cys655–Cys667, Cys662–Cys680, and Cys674–Cys689. The N-linked (GlcNAc...) asparagine glycan is linked to Asn567. LDL-receptor class A domains follow at residues 579–614 (ECSP…EENC), 615–653 (GCKE…KNCS), and 654–689 (FCQD…EWDC). N-linked (GlcNAc...) asparagine glycosylation occurs at Asn651. One can recognise an SRCR domain in the interval 690-801 (VTLSINVNSS…RRPAARMNKR (112 aa)). N-linked (GlcNAc...) asparagine glycans are attached at residues Asn697 and Asn761. Disulfide bonds link Cys790–Cys912, Cys828–Cys844, Cys926–Cys991, Cys955–Cys970, and Cys981–Cys1010. The region spanning 802–1035 (ILGGRTSRPG…FVEWIKRQIY (234 aa)) is the Peptidase S1 domain. Active-site charge relay system residues include His843 and Asp892. Ser985 (charge relay system) is an active-site residue. Asn1022 carries N-linked (GlcNAc...) asparagine glycosylation.

It belongs to the peptidase S1 family. N-glycosylated; required for processing and activation. In terms of processing, activated through proteolytic processing by a trypsin-like protease; cleaved into a N-terminal propeptide and an activated corin protease fragment. Different soluble forms are produced by cleavage and autocatalytic cleavage: Atrial natriuretic peptide-converting enzyme, 180 kDa soluble fragment is produced by cleavage by ADAM10, while 160 kDa and 100 kDa soluble fragments are produced by autocatalytic cleavage. Cleavage by ADAM10 to produce soluble 180 kDa soluble fragment takes place after the transmembrane region and before FZ 1. Post-translationally, a disulfide bond links the activated corin protease fragment and the N-terminal propeptide. The disulfide bond also links the activated corin protease fragment with soluble fragments (100 kDa, 160 kDa and 180 kDa fragments). In terms of tissue distribution, highly expressed in heart. Expressed in heart myocytes. Also expressed in pregnant uterus. Detected in blood, in plasma as well as in serum (at protein level).

The protein resides in the cell membrane. It localises to the secreted. Its activity is regulated as follows. Inhibited in a dose-dependent manner by non-specific trypsin-like serine protease inhibitors including benzamidine. In terms of biological role, serine-type endopeptidase involved in atrial natriuretic peptide (NPPA) and brain natriuretic peptide (NPPB) processing. Converts through proteolytic cleavage the non-functional propeptides NPPA and NPPB into their active hormones, ANP and BNP(1-32) respectively, thereby regulating blood pressure in the heart and promoting natriuresis, diuresis and vasodilation. Proteolytic cleavage of pro-NPPA also plays a role in female pregnancy by promoting trophoblast invasion and spiral artery remodeling in uterus. Also acts as a regulator of sodium reabsorption in kidney. Its function is as follows. Has weaker endopeptidase activity compared to isoform 1. The chain is Atrial natriuretic peptide-converting enzyme (CORIN) from Homo sapiens (Human).